The following is a 154-amino-acid chain: MRYHQYYPVDIVNGPGTRCTLFVSGCVHECPGCYNKSTWRLNSGQPFTKEMEDKIIADLNDTRIHRQGISLSGGDPLHPQNVPDILALVQRIHAECPGKDIWVWTGYKLDELNAAQMQVVDLINVLVDGKFVQDLKDPALIWRGSSNQVVHHLR.

Residues Cys26, Cys30, and Cys33 each contribute to the [4Fe-4S] cluster site. S-adenosyl-L-methionine contacts are provided by residues 32–34 and Gly74; that span reads GCY.

The protein belongs to the organic radical-activating enzymes family. In terms of assembly, forms a tetramer composed of two NrdD and two NrdG subunits. It depends on [4Fe-4S] cluster as a cofactor.

It localises to the cytoplasm. It catalyses the reaction glycyl-[protein] + reduced [flavodoxin] + S-adenosyl-L-methionine = glycin-2-yl radical-[protein] + semiquinone [flavodoxin] + 5'-deoxyadenosine + L-methionine + H(+). Functionally, activation of anaerobic ribonucleoside-triphosphate reductase under anaerobic conditions by generation of an organic free radical, using S-adenosylmethionine and reduced flavodoxin as cosubstrates to produce 5'-deoxy-adenosine. This Salmonella typhimurium (strain LT2 / SGSC1412 / ATCC 700720) protein is Anaerobic ribonucleoside-triphosphate reductase-activating protein (nrdG).